The primary structure comprises 301 residues: Acetylglutamate kinase (301 aa).

Substrate-binding positions include 70 to 71, R92, and N185; that span reads GG.

It belongs to the acetylglutamate kinase family. ArgB subfamily.

The protein localises to the cytoplasm. The enzyme catalyses N-acetyl-L-glutamate + ATP = N-acetyl-L-glutamyl 5-phosphate + ADP. Its pathway is amino-acid biosynthesis; L-arginine biosynthesis; N(2)-acetyl-L-ornithine from L-glutamate: step 2/4. In terms of biological role, catalyzes the ATP-dependent phosphorylation of N-acetyl-L-glutamate. This chain is Acetylglutamate kinase, found in Synechococcus elongatus (strain ATCC 33912 / PCC 7942 / FACHB-805) (Anacystis nidulans R2).